Reading from the N-terminus, the 98-residue chain is C-X-C motif chemokine 10 (98 aa).

Residues 1-21 form the signal peptide; it reads MNQTAILICCLVFLTLSGIQG. Position 26 is a citrulline (Arg26). Cystine bridges form between Cys30–Cys57 and Cys32–Cys74.

The protein belongs to the intercrine alpha (chemokine CxC) family.

The protein localises to the secreted. In terms of biological role, chemotactic for monocytes and T-lymphocytes. Binds to CXCR3. This chain is C-X-C motif chemokine 10 (CXCL10), found in Macaca mulatta (Rhesus macaque).